Consider the following 117-residue polypeptide: Probable prefoldin subunit 1 (117 aa).

This sequence belongs to the prefoldin subunit beta family. Heterohexamer of two PFD-alpha type and four PFD-beta type subunits. In terms of tissue distribution, expressed in the distal cell tip of developing embryos.

It localises to the cytoplasm. In terms of biological role, binds specifically to cytosolic chaperonin (c-CPN) and transfers target proteins to it. Binds to nascent polypeptide chain and promotes folding in an environment in which there are many competing pathways for nonnative proteins. Has a role in gonadogenesis. This chain is Probable prefoldin subunit 1 (pfd-1), found in Caenorhabditis elegans.